Here is a 339-residue protein sequence, read N- to C-terminus: DNA-directed RNA polymerase subunit alpha (339 aa).

The segment at methionine 1–glutamate 233 is alpha N-terminal domain (alpha-NTD). The interval lysine 264–leucine 339 is alpha C-terminal domain (alpha-CTD).

This sequence belongs to the RNA polymerase alpha chain family. In terms of assembly, in plastids the minimal PEP RNA polymerase catalytic core is composed of four subunits: alpha, beta, beta', and beta''. When a (nuclear-encoded) sigma factor is associated with the core the holoenzyme is formed, which can initiate transcription.

The protein resides in the plastid. It localises to the chloroplast. It catalyses the reaction RNA(n) + a ribonucleoside 5'-triphosphate = RNA(n+1) + diphosphate. In terms of biological role, DNA-dependent RNA polymerase catalyzes the transcription of DNA into RNA using the four ribonucleoside triphosphates as substrates. The sequence is that of DNA-directed RNA polymerase subunit alpha from Zea mays (Maize).